We begin with the raw amino-acid sequence, 275 residues long: 3-methyl-2-oxobutanoate hydroxymethyltransferase (275 aa).

Mg(2+)-binding residues include aspartate 51 and aspartate 90. 3-methyl-2-oxobutanoate is bound by residues 51-52, aspartate 90, and lysine 120; that span reads DS. Position 122 (glutamate 122) interacts with Mg(2+). The active-site Proton acceptor is glutamate 189.

It belongs to the PanB family. Homodecamer; pentamer of dimers. Requires Mg(2+) as cofactor.

It is found in the cytoplasm. The enzyme catalyses 3-methyl-2-oxobutanoate + (6R)-5,10-methylene-5,6,7,8-tetrahydrofolate + H2O = 2-dehydropantoate + (6S)-5,6,7,8-tetrahydrofolate. The protein operates within cofactor biosynthesis; (R)-pantothenate biosynthesis; (R)-pantoate from 3-methyl-2-oxobutanoate: step 1/2. Its function is as follows. Catalyzes the reversible reaction in which hydroxymethyl group from 5,10-methylenetetrahydrofolate is transferred onto alpha-ketoisovalerate to form ketopantoate. This Phenylobacterium zucineum (strain HLK1) protein is 3-methyl-2-oxobutanoate hydroxymethyltransferase.